The chain runs to 265 residues: Aliphatic sulfonates import ATP-binding protein SsuB 1 (265 aa).

One can recognise an ABC transporter domain in the interval 31 to 255 (FAFKGVEKRF…RRGSAELARL (225 aa)). 63–70 (GKSGCGKS) contacts ATP.

It belongs to the ABC transporter superfamily. Aliphatic sulfonates importer (TC 3.A.1.17.2) family. The complex is composed of two ATP-binding proteins (SsuB), two transmembrane proteins (SsuC) and a solute-binding protein (SsuA).

It localises to the cell inner membrane. It carries out the reaction ATP + H2O + aliphatic sulfonate-[sulfonate-binding protein]Side 1 = ADP + phosphate + aliphatic sulfonateSide 2 + [sulfonate-binding protein]Side 1.. In terms of biological role, part of the ABC transporter complex SsuABC involved in aliphatic sulfonates import. Responsible for energy coupling to the transport system. The protein is Aliphatic sulfonates import ATP-binding protein SsuB 1 of Mesorhizobium japonicum (strain LMG 29417 / CECT 9101 / MAFF 303099) (Mesorhizobium loti (strain MAFF 303099)).